The following is a 656-amino-acid chain: tRNA 5-methylaminomethyl-2-thiouridine biosynthesis bifunctional protein MnmC (656 aa).

Residues methionine 1–alanine 236 form a tRNA (mnm(5)s(2)U34)-methyltransferase region. The segment at isoleucine 260–serine 656 is FAD-dependent cmnm(5)s(2)U34 oxidoreductase.

This sequence in the N-terminal section; belongs to the methyltransferase superfamily. tRNA (mnm(5)s(2)U34)-methyltransferase family. It in the C-terminal section; belongs to the DAO family. FAD serves as cofactor.

It is found in the cytoplasm. The enzyme catalyses 5-aminomethyl-2-thiouridine(34) in tRNA + S-adenosyl-L-methionine = 5-methylaminomethyl-2-thiouridine(34) in tRNA + S-adenosyl-L-homocysteine + H(+). In terms of biological role, catalyzes the last two steps in the biosynthesis of 5-methylaminomethyl-2-thiouridine (mnm(5)s(2)U) at the wobble position (U34) in tRNA. Catalyzes the FAD-dependent demodification of cmnm(5)s(2)U34 to nm(5)s(2)U34, followed by the transfer of a methyl group from S-adenosyl-L-methionine to nm(5)s(2)U34, to form mnm(5)s(2)U34. In Paraburkholderia xenovorans (strain LB400), this protein is tRNA 5-methylaminomethyl-2-thiouridine biosynthesis bifunctional protein MnmC.